Reading from the N-terminus, the 325-residue chain is Transaldolase (325 aa).

Lysine 125 (schiff-base intermediate with substrate) is an active-site residue.

It belongs to the transaldolase family. Type 2 subfamily.

Its subcellular location is the cytoplasm. It catalyses the reaction D-sedoheptulose 7-phosphate + D-glyceraldehyde 3-phosphate = D-erythrose 4-phosphate + beta-D-fructose 6-phosphate. It functions in the pathway carbohydrate degradation; pentose phosphate pathway; D-glyceraldehyde 3-phosphate and beta-D-fructose 6-phosphate from D-ribose 5-phosphate and D-xylulose 5-phosphate (non-oxidative stage): step 2/3. Transaldolase is important for the balance of metabolites in the pentose-phosphate pathway. In Campylobacter jejuni subsp. doylei (strain ATCC BAA-1458 / RM4099 / 269.97), this protein is Transaldolase.